The primary structure comprises 44 residues: uncharacterized protein (44 aa).

The chain crosses the membrane as a helical span at residues 4-24 (ISSILIRGGGVLIVVILLLWI).

The protein resides in the membrane. This is an uncharacterized protein from Ornithodoros (relapsing fever ticks).